The sequence spans 228 residues: ATP phosphoribosyltransferase (228 aa).

This sequence belongs to the ATP phosphoribosyltransferase family. Short subfamily. Heteromultimer composed of HisG and HisZ subunits.

It localises to the cytoplasm. The enzyme catalyses 1-(5-phospho-beta-D-ribosyl)-ATP + diphosphate = 5-phospho-alpha-D-ribose 1-diphosphate + ATP. The protein operates within amino-acid biosynthesis; L-histidine biosynthesis; L-histidine from 5-phospho-alpha-D-ribose 1-diphosphate: step 1/9. In terms of biological role, catalyzes the condensation of ATP and 5-phosphoribose 1-diphosphate to form N'-(5'-phosphoribosyl)-ATP (PR-ATP). Has a crucial role in the pathway because the rate of histidine biosynthesis seems to be controlled primarily by regulation of HisG enzymatic activity. In Acinetobacter baylyi (strain ATCC 33305 / BD413 / ADP1), this protein is ATP phosphoribosyltransferase.